The following is a 153-amino-acid chain: Pheromone-binding protein Gp-9 (153 aa).

Residues 1-19 form the signal peptide; that stretch reads MKTFVLHIFIFALVAFASA. Intrachain disulfides connect C37–C77, C73–C129, and C118–C138.

Belongs to the PBP/GOBP family. As to quaternary structure, homodimer.

It localises to the secreted. Colony queen number, a major feature of social organization, is associated with worker genotype for Gp-9. Colonies are headed by either a single reproductive queen (monogyne form) or multiple queens (polygyne form). Differences in worker Gp-9 genotypes between social forms may cause differences in workers' abilities to recognize queens and regulate their numbers. The protein is Pheromone-binding protein Gp-9 of Solenopsis daguerrei (Workerless parasitic ant).